An 85-amino-acid polypeptide reads, in one-letter code: Small ribosomal subunit protein bS16c (85 aa).

Belongs to the bacterial ribosomal protein bS16 family.

It localises to the plastid. It is found in the chloroplast. The polypeptide is Small ribosomal subunit protein bS16c (Agrostis stolonifera (Creeping bentgrass)).